We begin with the raw amino-acid sequence, 1386 residues long: DNA-directed RNA polymerase subunit beta' (1386 aa).

Zn(2+) contacts are provided by cysteine 75, cysteine 77, cysteine 90, and cysteine 93. Mg(2+) is bound by residues aspartate 466, aspartate 468, and aspartate 470. Residues cysteine 809, cysteine 883, cysteine 890, and cysteine 893 each coordinate Zn(2+).

It belongs to the RNA polymerase beta' chain family. In terms of assembly, the RNAP catalytic core consists of 2 alpha, 1 beta, 1 beta' and 1 omega subunit. When a sigma factor is associated with the core the holoenzyme is formed, which can initiate transcription. Requires Mg(2+) as cofactor. Zn(2+) is required as a cofactor.

The catalysed reaction is RNA(n) + a ribonucleoside 5'-triphosphate = RNA(n+1) + diphosphate. In terms of biological role, DNA-dependent RNA polymerase catalyzes the transcription of DNA into RNA using the four ribonucleoside triphosphates as substrates. This chain is DNA-directed RNA polymerase subunit beta', found in Oleidesulfovibrio alaskensis (strain ATCC BAA-1058 / DSM 17464 / G20) (Desulfovibrio alaskensis).